The primary structure comprises 263 residues: uncharacterized protein (263 aa).

This sequence belongs to the AtsA family.

It is found in the plastid. Its subcellular location is the chloroplast. This is an uncharacterized protein from Porphyra purpurea (Red seaweed).